The chain runs to 199 residues: Recombination protein RecR (199 aa).

A C4-type zinc finger spans residues 57–72 (CQKCRTFTEQSLCPIC). Residues 81-176 (DTLCVVETPA…AVSRIAHGVP (96 aa)) enclose the Toprim domain.

Belongs to the RecR family.

In terms of biological role, may play a role in DNA repair. It seems to be involved in an RecBC-independent recombinational process of DNA repair. It may act with RecF and RecO. This chain is Recombination protein RecR, found in Shewanella amazonensis (strain ATCC BAA-1098 / SB2B).